The sequence spans 151 residues: Lipoprotein signal peptidase (151 aa).

Transmembrane regions (helical) follow at residues Leu3–Val23, Trp59–Ser79, and Leu85–Leu107. Residues Asp112 and Asp128 contribute to the active site. Residues Ile123–Leu143 traverse the membrane as a helical segment.

Belongs to the peptidase A8 family.

It is found in the cell membrane. The catalysed reaction is Release of signal peptides from bacterial membrane prolipoproteins. Hydrolyzes -Xaa-Yaa-Zaa-|-(S,diacylglyceryl)Cys-, in which Xaa is hydrophobic (preferably Leu), and Yaa (Ala or Ser) and Zaa (Gly or Ala) have small, neutral side chains.. The protein operates within protein modification; lipoprotein biosynthesis (signal peptide cleavage). This protein specifically catalyzes the removal of signal peptides from prolipoproteins. The polypeptide is Lipoprotein signal peptidase (Latilactobacillus sakei subsp. sakei (strain 23K) (Lactobacillus sakei subsp. sakei)).